Reading from the N-terminus, the 115-residue chain is Xenovulene A biosynthesis cluster protein asL2 (115 aa).

In terms of biological role, part of the gene cluster that mediates the biosynthesis of xenovulene A, an unusual meroterpenoid that has potent inhibitory effects on the human gamma-aminobutyrate A (GABAA) benzodiazepine receptor. The first step of xenovulene A biosynthesis is the biosynthesis of 3-methylorcinaldehyde performed by the non-reducing polyketide synthase aspks1. The salicylate hydroxylase asL1 then catalyzes the oxidative dearomatization of 3-methylorcinaldehyde to yield a dearomatized hydroxycyclohexadione. The 2-oxoglutarate-dependent dioxygenase asL3 further catalyzes the oxidative ring expansion to provide the first tropolone metabolite. The cytochrome P450 monooxygenase asR2 allows the synthesis of tropolone hemiacetal. In parallel, a previously unrecognised class of terpene cyclase, asR6, produces alpha-humulene from farnesylpyrophosphate (FPP). The putative Diels-Alderase asR5 probably catalyzes the formation of the tropolone-humulene skeleton by linking humulene and the polyketide moiety. Oxidative-ring contractions catalyzed by asL4 and asL6 then processively remove carbon atoms from the polyketide to yield xenovulene A. This chain is Xenovulene A biosynthesis cluster protein asL2, found in Sarocladium schorii (Acremonium strictum (strain IMI 501407)).